The chain runs to 580 residues: Malto-oligosyltrehalose trehalohydrolase (580 aa).

Positions 56-88 are disordered; that stretch reads LPDPRSARQPDGVHARSQRWEPPGQFGAARTDT. Residues 60–69 show a composition bias toward basic and acidic residues; the sequence is RSARQPDGVH. 245–250 serves as a coordination point for substrate; that stretch reads RLDAVH. Asp247 (nucleophile) is an active-site residue. Glu284 functions as the Proton donor in the catalytic mechanism. Substrate is bound by residues 309–313 and 379–384; these read DDIHH and HDQVGN.

This sequence belongs to the glycosyl hydrolase 13 family.

It is found in the cytoplasm. It catalyses the reaction hydrolysis of (1-&gt;4)-alpha-D-glucosidic linkage in 4-alpha-D-[(1-&gt;4)-alpha-D-glucanosyl]n trehalose to yield trehalose and (1-&gt;4)-alpha-D-glucan.. Its pathway is glycan biosynthesis; trehalose biosynthesis. Its function is as follows. Is involved in the biosynthesis of trehalose but not in that of capsular glucan and glycogen. The chain is Malto-oligosyltrehalose trehalohydrolase (treZ) from Mycobacterium tuberculosis (strain CDC 1551 / Oshkosh).